Consider the following 195-residue polypeptide: Ras-related protein Rab-31 (195 aa).

GTP-binding residues include Gly16, Gly18, Lys19, Ser20, Ser21, Asp32, and His33. Ser20 is a Mg(2+) binding site. 2 short sequence motifs (switch) span residues 30-42 (HFDHNISPTIGAS) and 63-79 (AGQERFHSLAPMYYRGS). Ser36 is subject to Phosphoserine. GTP-binding residues include Thr38, Gly64, Asn119, Asp122, Ala150, and Lys151. Position 38 (Thr38) interacts with Mg(2+). S-geranylgeranyl cysteine attachment occurs at residues Cys194 and Cys195.

The protein belongs to the small GTPase superfamily. Rab family. Interacts with OCRL. Interacts with NGFR. Interacts (in GDP-bound form) with RIN3 and GAPVD1, which function as guanine exchange factors (GEF). Interacts (in GTP-bound form) with EEA1. Interacts with EGFR. Interacts (in GTP-bound form) with APPL2; interaction contributes to or enhances recruitment of APPL2 to the phagosomes; interaction enhances Fc-gamma receptor-mediated phagocytosis through PI3K/Akt signaling in macrophages. Requires Mg(2+) as cofactor. In terms of tissue distribution, highest expression in placenta and brain with lower levels in heart and lung. Not detected in liver, skeletal muscle, kidney or pancreas.

It localises to the golgi apparatus. The protein localises to the trans-Golgi network. Its subcellular location is the trans-Golgi network membrane. It is found in the early endosome. The protein resides in the cytoplasmic vesicle. It localises to the phagosome. The protein localises to the phagosome membrane. The catalysed reaction is GTP + H2O = GDP + phosphate + H(+). Its activity is regulated as follows. Regulated by guanine nucleotide exchange factors (GEFs) including RIN3 and GAPVD1 which promote the exchange of bound GDP for free GTP. Regulated by GTPase activating proteins (GAPs) which increase the GTP hydrolysis activity. Inhibited by GDP dissociation inhibitors (GDIs) which prevent Rab-GDP dissociation. The small GTPases Rab are key regulators of intracellular membrane trafficking, from the formation of transport vesicles to their fusion with membranes. Rabs cycle between an inactive GDP-bound form and an active GTP-bound form that is able to recruit to membranes different set of downstream effectors directly responsible for vesicle formation, movement, tethering and fusion. Required for the integrity and for normal function of the Golgi apparatus and the trans-Golgi network. Plays a role in insulin-stimulated translocation of GLUT4 to the cell membrane. Plays a role in M6PR transport from the trans-Golgi network to endosomes. Plays a role in the internalization of EGFR from the cell membrane into endosomes. Plays a role in the maturation of phagosomes that engulf pathogens, such as S.aureus and M.tuberculosis. The protein is Ras-related protein Rab-31 of Homo sapiens (Human).